A 218-amino-acid polypeptide reads, in one-letter code: Elongation factor Ts (218 aa).

Positions 82–85 are involved in Mg(2+) ion dislocation from EF-Tu; it reads TDFV.

Belongs to the EF-Ts family.

The protein resides in the cytoplasm. Associates with the EF-Tu.GDP complex and induces the exchange of GDP to GTP. It remains bound to the aminoacyl-tRNA.EF-Tu.GTP complex up to the GTP hydrolysis stage on the ribosome. The protein is Elongation factor Ts of Picosynechococcus sp. (strain ATCC 27264 / PCC 7002 / PR-6) (Agmenellum quadruplicatum).